The chain runs to 236 residues: Phosphoribosylaminoimidazole-succinocarboxamide synthase (236 aa).

Belongs to the SAICAR synthetase family.

It carries out the reaction 5-amino-1-(5-phospho-D-ribosyl)imidazole-4-carboxylate + L-aspartate + ATP = (2S)-2-[5-amino-1-(5-phospho-beta-D-ribosyl)imidazole-4-carboxamido]succinate + ADP + phosphate + 2 H(+). It functions in the pathway purine metabolism; IMP biosynthesis via de novo pathway; 5-amino-1-(5-phospho-D-ribosyl)imidazole-4-carboxamide from 5-amino-1-(5-phospho-D-ribosyl)imidazole-4-carboxylate: step 1/2. In Hahella chejuensis (strain KCTC 2396), this protein is Phosphoribosylaminoimidazole-succinocarboxamide synthase.